The sequence spans 166 residues: Protein SprT (166 aa).

The SprT-like domain occupies 19–164 (REHLAKANLK…CVHCGDLLVA (146 aa)). His78 provides a ligand contact to Zn(2+). Residue Glu79 is part of the active site. His82 lines the Zn(2+) pocket.

It belongs to the SprT family. The cofactor is Zn(2+).

It is found in the cytoplasm. The chain is Protein SprT from Klebsiella pneumoniae (strain 342).